The primary structure comprises 122 residues: Photosystem II extrinsic protein U (122 aa).

The first 30 residues, 1 to 30 (MRWLLSILVRVVLVLCLCFAPLGIPVVARA), serve as a signal peptide directing secretion.

Belongs to the PsbU family. As to quaternary structure, PSII is composed of 1 copy each of membrane proteins PsbA, PsbB, PsbC, PsbD, PsbE, PsbF, PsbH, PsbI, PsbJ, PsbK, PsbL, PsbM, PsbT, PsbX, PsbY, PsbZ, Psb30/Ycf12, peripheral proteins PsbO, CyanoQ (PsbQ), PsbU, PsbV and a large number of cofactors. It forms dimeric complexes.

The protein localises to the cellular thylakoid membrane. Functionally, one of the extrinsic, lumenal subunits of photosystem II (PSII). PSII is a light-driven water plastoquinone oxidoreductase, using light energy to abstract electrons from H(2)O, generating a proton gradient subsequently used for ATP formation. The extrinsic proteins stabilize the structure of photosystem II oxygen-evolving complex (OEC), the ion environment of oxygen evolution and protect the OEC against heat-induced inactivation. The polypeptide is Photosystem II extrinsic protein U (Synechococcus sp. (strain JA-2-3B'a(2-13)) (Cyanobacteria bacterium Yellowstone B-Prime)).